We begin with the raw amino-acid sequence, 326 residues long: Phosphatidylinositol:ceramide inositolphosphotransferase (326 aa).

The next 6 helical transmembrane spans lie at 33–53 (LLLAGLVFQYIHGLAARGVHY), 82–102 (SVFTFIFISFLLWSFHPFIYH), 115–135 (VLAFLVASQFLRIITFYSTQL), 169–189 (VLFGCGDLIFSSHMIFTLVFV), 199–219 (RLIKILAWLMAIIQSLLIIAS), and 222–242 (HYSVDVVVAWYTVNLVVFFID). The active site involves His-181. Catalysis depends on residues His-222 and Asp-226. The interval 306–326 (MNGKHGEDINHTLSDATPNGT) is disordered. The segment covering 316-326 (HTLSDATPNGT) has biased composition (polar residues).

The protein belongs to the sphingomyelin synthase family.

The protein resides in the golgi apparatus. The protein localises to the trans-Golgi network membrane. Its function is as follows. Catalyzes the transfer of the phosphorylinositol group from phosphatidylinositol (PI) to phytoceramide, an essential step in sphingolipid biosynthesis. May play an important role in modulating plant programmed cell death (PCD) associated with defense (e.g. toward Golovinomyces cichoracearum) by promoting sphingolipid metabolism and regulating ceramide accumulation. The polypeptide is Phosphatidylinositol:ceramide inositolphosphotransferase (ERH1) (Oryza sativa subsp. indica (Rice)).